The primary structure comprises 185 residues: Ribosome-recycling factor (185 aa).

Belongs to the RRF family.

The protein resides in the cytoplasm. In terms of biological role, responsible for the release of ribosomes from messenger RNA at the termination of protein biosynthesis. May increase the efficiency of translation by recycling ribosomes from one round of translation to another. In Dichelobacter nodosus (strain VCS1703A), this protein is Ribosome-recycling factor.